We begin with the raw amino-acid sequence, 1038 residues long: Ras GTPase-activating protein 1 (1038 aa).

The residue at position 1 (Met1) is an N-acetylmethionine. Positions 1–16 are enriched in low complexity; that stretch reads MMAAEAGSEEGGPATA. 2 disordered regions span residues 1 to 24 and 117 to 152; these read MMAA…AAAT and ETLG…SLDG. The span at 124–135 shows a compositional bias: pro residues; that stretch reads GFPPLPPPPLLP. In terms of domain architecture, SH2 1 spans 172–263; the sequence is WYHGKLDRTI…LKGEKLLYPV (92 aa). Residues 270–332 form the SH3 domain; that stretch reads EDRRRVRAIL…VEDLVEEVGR (63 aa). The SH2 2 domain maps to 342 to 432; that stretch reads WFHGKISKQE…VEGYYLKEPV (91 aa). Positions 465–568 constitute a PH domain; that stretch reads NIVKKGYLLK…WMKGLQAFCS (104 aa). Positions 568 to 681 constitute a C2 domain; it reads SLRKSSPGTS…QKGHATDEWF (114 aa). Tyr606 carries the phosphotyrosine modification. Residues 755 to 965 enclose the Ras-GAP domain; sequence KLESLLLCTL…HRMIMFLDEL (211 aa). Ser822 is subject to Phosphoserine.

Interacts with SQSTM1. Interacts with SPSB1; the interaction does not promote degradation. Interacts with CAV2 (tyrosine phosphorylated form). Directly interacts with NCK1. Interacts with PDGFRB (tyrosine phosphorylated). Interacts (via SH2 domain) with the 'Tyr-9' phosphorylated form of PDPK1. Interacts with tyrosine-phosphorylated EPHB4. In terms of processing, phosphorylated by SRC and LCK. The phosphorylation SRC inhibits its ability to stimulate the Ras-GTPase activity, whereas phosphorylation by LCK does not display any effect on stimulation activity.

The protein resides in the cytoplasm. Its function is as follows. Inhibitory regulator of the Ras-cyclic AMP pathway. Stimulates the GTPase of normal but not oncogenic Ras p21. The polypeptide is Ras GTPase-activating protein 1 (Rasa1) (Rattus norvegicus (Rat)).